A 448-amino-acid chain; its full sequence is Trigger factor (448 aa).

The 86-residue stretch at 172 to 257 folds into the PPIase FKBP-type domain; it reads GDRVTVDFVG…MKKIEWPHMP (86 aa).

Belongs to the FKBP-type PPIase family. Tig subfamily.

It is found in the cytoplasm. It carries out the reaction [protein]-peptidylproline (omega=180) = [protein]-peptidylproline (omega=0). Involved in protein export. Acts as a chaperone by maintaining the newly synthesized protein in an open conformation. Functions as a peptidyl-prolyl cis-trans isomerase. The polypeptide is Trigger factor (Burkholderia vietnamiensis (strain G4 / LMG 22486) (Burkholderia cepacia (strain R1808))).